The primary structure comprises 429 residues: Enolase (429 aa).

Position 162 (Gln162) interacts with (2R)-2-phosphoglycerate. Glu204 functions as the Proton donor in the catalytic mechanism. Mg(2+) is bound by residues Asp241, Glu283, and Asp310. (2R)-2-phosphoglycerate is bound by residues Lys335, Arg364, Ser365, and Lys386. Lys335 functions as the Proton acceptor in the catalytic mechanism.

It belongs to the enolase family. The cofactor is Mg(2+).

It is found in the cytoplasm. The protein localises to the secreted. Its subcellular location is the cell surface. The enzyme catalyses (2R)-2-phosphoglycerate = phosphoenolpyruvate + H2O. The protein operates within carbohydrate degradation; glycolysis; pyruvate from D-glyceraldehyde 3-phosphate: step 4/5. Functionally, catalyzes the reversible conversion of 2-phosphoglycerate (2-PG) into phosphoenolpyruvate (PEP). It is essential for the degradation of carbohydrates via glycolysis. This chain is Enolase, found in Mycobacterium sp. (strain JLS).